A 390-amino-acid chain; its full sequence is NADH-quinone oxidoreductase subunit H (390 aa).

The next 9 helical transmembrane spans lie at 4–24 (WLLT…ALLT), 78–98 (LVYT…FGGI), 120–140 (VLAL…GGWA), 157–177 (MISY…LVGS), 191–211 (GWMI…SFAE), 247–266 (YVNM…GGWR), 278–298 (IADI…FVFI), 315–337 (FGWK…YIAF), and 341–360 (WGWW…LLAL).

Belongs to the complex I subunit 1 family. In terms of assembly, NDH-1 is composed of 15 different subunits. Subunits NuoA, H, J, K, L, M, N constitute the membrane sector of the complex.

It localises to the cell membrane. The enzyme catalyses a quinone + NADH + 5 H(+)(in) = a quinol + NAD(+) + 4 H(+)(out). Functionally, NDH-1 shuttles electrons from NADH, via FMN and iron-sulfur (Fe-S) centers, to quinones in the respiratory chain. The immediate electron acceptor for the enzyme in this species is believed to be ubiquinone. Couples the redox reaction to proton translocation (for every two electrons transferred, four hydrogen ions are translocated across the cytoplasmic membrane), and thus conserves the redox energy in a proton gradient. This subunit may bind ubiquinone. The polypeptide is NADH-quinone oxidoreductase subunit H (Deinococcus deserti (strain DSM 17065 / CIP 109153 / LMG 22923 / VCD115)).